A 656-amino-acid chain; its full sequence is Acetyl-coenzyme A synthetase (656 aa).

CoA-binding positions include 198–201 and Thr-316; that span reads RGGR. ATP-binding positions include 392-394, 416-421, Asp-507, and Arg-522; these read GEP and DTFWQT. CoA is bound at residue Ser-530. Arg-533 is an ATP binding site. Residues Val-544, His-546, and Val-549 each contribute to the Mg(2+) site. Arg-591 lines the CoA pocket. Lys-616 is subject to N6-acetyllysine.

Belongs to the ATP-dependent AMP-binding enzyme family. Mg(2+) serves as cofactor. In terms of processing, acetylated. Deacetylation by the SIR2-homolog deacetylase activates the enzyme.

It catalyses the reaction acetate + ATP + CoA = acetyl-CoA + AMP + diphosphate. Catalyzes the conversion of acetate into acetyl-CoA (AcCoA), an essential intermediate at the junction of anabolic and catabolic pathways. AcsA undergoes a two-step reaction. In the first half reaction, AcsA combines acetate with ATP to form acetyl-adenylate (AcAMP) intermediate. In the second half reaction, it can then transfer the acetyl group from AcAMP to the sulfhydryl group of CoA, forming the product AcCoA. The protein is Acetyl-coenzyme A synthetase of Rhodobacter capsulatus (strain ATCC BAA-309 / NBRC 16581 / SB1003).